Reading from the N-terminus, the 273-residue chain is Putative pyruvate, phosphate dikinase regulatory protein (273 aa).

Position 149–156 (149–156) interacts with ADP; that stretch reads GPSRTSKT.

It belongs to the pyruvate, phosphate/water dikinase regulatory protein family. PDRP subfamily.

It catalyses the reaction N(tele)-phospho-L-histidyl/L-threonyl-[pyruvate, phosphate dikinase] + ADP = N(tele)-phospho-L-histidyl/O-phospho-L-threonyl-[pyruvate, phosphate dikinase] + AMP + H(+). The catalysed reaction is N(tele)-phospho-L-histidyl/O-phospho-L-threonyl-[pyruvate, phosphate dikinase] + phosphate + H(+) = N(tele)-phospho-L-histidyl/L-threonyl-[pyruvate, phosphate dikinase] + diphosphate. Functionally, bifunctional serine/threonine kinase and phosphorylase involved in the regulation of the pyruvate, phosphate dikinase (PPDK) by catalyzing its phosphorylation/dephosphorylation. The chain is Putative pyruvate, phosphate dikinase regulatory protein from Rickettsia akari (strain Hartford).